The following is a 445-amino-acid chain: D-serine transporter DsdX (445 aa).

12 helical membrane passes run 5–25 (IWVV…IVKF), 29–49 (PFLA…MGPL), 57–77 (SGIG…TILG), 106–126 (VLVG…VLLI), 140–160 (LLKL…VVPP), 178–198 (VIVY…PLFL), 224–244 (TLPS…LMLV), 265–285 (IGNP…VLGI), 302–322 (FGSI…NAIL), 343–363 (ILLA…ATVA), 385–405 (IIAI…DSLF), and 425–445 (TATF…SFII).

Belongs to the GntP permease family.

Its subcellular location is the cell inner membrane. Its activity is regulated as follows. Uptake of D-serine is inhibited by carbonyl cyanide m-chlorophenylhydrazone (CCCP), and at high concentrations of D-threonine, stimulated by D-cycloserine and not affected by D-alanine or glycine. Its function is as follows. Protein that allows transport of D-serine across the inner membrane, does not transport D-alanine nor probably glycine. Is probably a H(+) symporter, as CCCP inhibits transport. Transports D-serine more efficiently than CycA. The protein is D-serine transporter DsdX (dsdX) of Escherichia coli O6:H1 (strain CFT073 / ATCC 700928 / UPEC).